Consider the following 293-residue polypeptide: Phosphate import ATP-binding protein PstB (293 aa).

The ABC transporter domain maps to 46–288 (FGIRGVDVFY…PDHELTEAYI (243 aa)). Residue 78 to 85 (GPSGCGKS) participates in ATP binding.

This sequence belongs to the ABC transporter superfamily. Phosphate importer (TC 3.A.1.7) family. The complex is composed of two ATP-binding proteins (PstB), two transmembrane proteins (PstC and PstA) and a solute-binding protein (PstS).

It localises to the cell inner membrane. It catalyses the reaction phosphate(out) + ATP + H2O = ADP + 2 phosphate(in) + H(+). Its function is as follows. Part of the ABC transporter complex PstSACB involved in phosphate import. Responsible for energy coupling to the transport system. This chain is Phosphate import ATP-binding protein PstB, found in Saccharophagus degradans (strain 2-40 / ATCC 43961 / DSM 17024).